A 414-amino-acid chain; its full sequence is Serine hydroxymethyltransferase (414 aa).

Residues leucine 117 and 121–123 (GHL) contribute to the (6S)-5,6,7,8-tetrahydrofolate site. The residue at position 226 (lysine 226) is an N6-(pyridoxal phosphate)lysine. Residues glutamate 241 and 349 to 351 (TPF) contribute to the (6S)-5,6,7,8-tetrahydrofolate site.

The protein belongs to the SHMT family. Homodimer. It depends on pyridoxal 5'-phosphate as a cofactor.

The protein resides in the cytoplasm. The enzyme catalyses (6R)-5,10-methylene-5,6,7,8-tetrahydrofolate + glycine + H2O = (6S)-5,6,7,8-tetrahydrofolate + L-serine. It participates in one-carbon metabolism; tetrahydrofolate interconversion. The protein operates within amino-acid biosynthesis; glycine biosynthesis; glycine from L-serine: step 1/1. Catalyzes the reversible interconversion of serine and glycine with tetrahydrofolate (THF) serving as the one-carbon carrier. Also exhibits THF-independent aldolase activity toward beta-hydroxyamino acids, producing glycine and aldehydes, via a retro-aldol mechanism. The protein is Serine hydroxymethyltransferase of Methanothrix thermoacetophila (strain DSM 6194 / JCM 14653 / NBRC 101360 / PT) (Methanosaeta thermophila).